Consider the following 861-residue polypeptide: Probable alpha,alpha-trehalose-phosphate synthase [UDP-forming] 10 (861 aa).

Ser-5 is modified (phosphoserine). Thr-32 is modified (phosphothreonine). The interval 59-546 (ERKIIVANFL…ARSFSQDLER (488 aa)) is glycosyltransferase.

The protein in the N-terminal section; belongs to the glycosyltransferase 20 family. This sequence in the C-terminal section; belongs to the trehalose phosphatase family.

The enzyme catalyses D-glucose 6-phosphate + UDP-alpha-D-glucose = alpha,alpha-trehalose 6-phosphate + UDP + H(+). This chain is Probable alpha,alpha-trehalose-phosphate synthase [UDP-forming] 10 (TPS10), found in Arabidopsis thaliana (Mouse-ear cress).